A 134-amino-acid chain; its full sequence is Large-conductance mechanosensitive channel (134 aa).

2 helical membrane-spanning segments follow: residues Val-16–Leu-36 and Gly-81–Val-101.

It belongs to the MscL family. Homopentamer.

It localises to the cell inner membrane. Functionally, channel that opens in response to stretch forces in the membrane lipid bilayer. May participate in the regulation of osmotic pressure changes within the cell. The chain is Large-conductance mechanosensitive channel from Xylella fastidiosa (strain M12).